The primary structure comprises 236 residues: Sugar fermentation stimulation protein homolog (236 aa).

The protein belongs to the SfsA family.

The sequence is that of Sugar fermentation stimulation protein homolog from Proteus mirabilis (strain HI4320).